A 218-amino-acid polypeptide reads, in one-letter code: uncharacterized protein (218 aa).

The signal sequence occupies residues 1–21 (MKKFVYKYSFGALLLLSGLSS). Cys22 carries the N-palmitoyl cysteine lipid modification. Cys22 carries the S-diacylglycerol cysteine lipid modification.

The protein belongs to the chlamydial CPn_0875/CT_734/TC_0107 family.

It localises to the cell membrane. This is an uncharacterized protein from Chlamydia muridarum (strain MoPn / Nigg).